The sequence spans 236 residues: Eukaryotic translation initiation factor 3 subunit J (236 aa).

The disordered stretch occupies residues Ala20–Leu88. A compositionally biased stretch (acidic residues) spans Gly28–Lys46. Composition is skewed to basic and acidic residues over residues Asp47–Val58 and Ala68–Leu88.

This sequence belongs to the eIF-3 subunit J family. In terms of assembly, component of the eukaryotic translation initiation factor 3 (eIF-3) complex. The eIF-3 complex interacts with pix.

Its subcellular location is the cytoplasm. Functionally, component of the eukaryotic translation initiation factor 3 (eIF-3) complex, which is involved in protein synthesis of a specialized repertoire of mRNAs and, together with other initiation factors, stimulates binding of mRNA and methionyl-tRNAi to the 40S ribosome. The eIF-3 complex specifically targets and initiates translation of a subset of mRNAs involved in cell proliferation. In Drosophila willistoni (Fruit fly), this protein is Eukaryotic translation initiation factor 3 subunit J.